Consider the following 497-residue polypeptide: Bifunctional protein GlmU (497 aa).

The interval 1–252 is pyrophosphorylase; that stretch reads MSQPSARPSA…VWEVEGANDR (252 aa). UDP-N-acetyl-alpha-D-glucosamine contacts are provided by residues 14–17, Lys28, Gln86, 91–92, 115–117, Gly154, Glu169, Asn192, and Asn250; these read LAAG, GT, and YGD. Asp117 serves as a coordination point for Mg(2+). Asn250 is a binding site for Mg(2+). The tract at residues 253 to 273 is linker; sequence RQLSDLGRRLNERVLRHWMKE. The tract at residues 274–497 is N-acetyltransferase; the sequence is GVTVVDPSST…AGAEGSGAQG (224 aa). Residues Arg355 and Lys373 each contribute to the UDP-N-acetyl-alpha-D-glucosamine site. The Proton acceptor role is filled by His385. UDP-N-acetyl-alpha-D-glucosamine contacts are provided by Tyr388 and Asn399. Acetyl-CoA is bound by residues 408-409, Ser427, and Ala445; that span reads NY. Positions 473–497 are disordered; it reads PAKRPGTSSAEAARAAGAEGSGAQG. Over residues 480-490 the composition is skewed to low complexity; that stretch reads SSAEAARAAGA.

This sequence in the N-terminal section; belongs to the N-acetylglucosamine-1-phosphate uridyltransferase family. In the C-terminal section; belongs to the transferase hexapeptide repeat family. As to quaternary structure, homotrimer. It depends on Mg(2+) as a cofactor.

It localises to the cytoplasm. The enzyme catalyses alpha-D-glucosamine 1-phosphate + acetyl-CoA = N-acetyl-alpha-D-glucosamine 1-phosphate + CoA + H(+). It carries out the reaction N-acetyl-alpha-D-glucosamine 1-phosphate + UTP + H(+) = UDP-N-acetyl-alpha-D-glucosamine + diphosphate. It functions in the pathway nucleotide-sugar biosynthesis; UDP-N-acetyl-alpha-D-glucosamine biosynthesis; N-acetyl-alpha-D-glucosamine 1-phosphate from alpha-D-glucosamine 6-phosphate (route II): step 2/2. It participates in nucleotide-sugar biosynthesis; UDP-N-acetyl-alpha-D-glucosamine biosynthesis; UDP-N-acetyl-alpha-D-glucosamine from N-acetyl-alpha-D-glucosamine 1-phosphate: step 1/1. The protein operates within bacterial outer membrane biogenesis; LPS lipid A biosynthesis. Catalyzes the last two sequential reactions in the de novo biosynthetic pathway for UDP-N-acetylglucosamine (UDP-GlcNAc). The C-terminal domain catalyzes the transfer of acetyl group from acetyl coenzyme A to glucosamine-1-phosphate (GlcN-1-P) to produce N-acetylglucosamine-1-phosphate (GlcNAc-1-P), which is converted into UDP-GlcNAc by the transfer of uridine 5-monophosphate (from uridine 5-triphosphate), a reaction catalyzed by the N-terminal domain. This is Bifunctional protein GlmU from Micrococcus luteus (strain ATCC 4698 / DSM 20030 / JCM 1464 / CCM 169 / CCUG 5858 / IAM 1056 / NBRC 3333 / NCIMB 9278 / NCTC 2665 / VKM Ac-2230) (Micrococcus lysodeikticus).